A 148-amino-acid polypeptide reads, in one-letter code: D-aminoacyl-tRNA deacylase (148 aa).

The Gly-cisPro motif, important for rejection of L-amino acids motif lies at 136–137 (GP).

The protein belongs to the DTD family. Homodimer.

The protein localises to the cytoplasm. It catalyses the reaction glycyl-tRNA(Ala) + H2O = tRNA(Ala) + glycine + H(+). The enzyme catalyses a D-aminoacyl-tRNA + H2O = a tRNA + a D-alpha-amino acid + H(+). Functionally, an aminoacyl-tRNA editing enzyme that deacylates mischarged D-aminoacyl-tRNAs. Also deacylates mischarged glycyl-tRNA(Ala), protecting cells against glycine mischarging by AlaRS. Acts via tRNA-based rather than protein-based catalysis; rejects L-amino acids rather than detecting D-amino acids in the active site. By recycling D-aminoacyl-tRNA to D-amino acids and free tRNA molecules, this enzyme counteracts the toxicity associated with the formation of D-aminoacyl-tRNA entities in vivo and helps enforce protein L-homochirality. The protein is D-aminoacyl-tRNA deacylase of Kosmotoga olearia (strain ATCC BAA-1733 / DSM 21960 / TBF 19.5.1).